The primary structure comprises 269 residues: MVKDFSSQHPLGDVSPSQYKSEVRNLSFYYGSFLALKNINMMLHEKKVTALIGPSGCGKSTFLRCFNRMHDLYPGNRYMGDIILHPDNVNILSRSVDPIEVRMRISMVFQKPNPFPKSIYENVAYGLRVRGVRRRAILDEKVEDALRGAALWDEVKDRLHQLAYNLSGGQQQRLCIARALATDPEILLFDEPTSALDPIATASIEELIADLKDKVTILIVTHNMQQAARVSDYTAYMYLGEVIEFGVTDTIFIKPKNKQTEDYITGRFG.

The 244-residue stretch at 21–264 (SEVRNLSFYY…PKNKQTEDYI (244 aa)) folds into the ABC transporter domain. Position 53–60 (53–60 (GPSGCGKS)) interacts with ATP.

Belongs to the ABC transporter superfamily. Phosphate importer (TC 3.A.1.7) family. In terms of assembly, the complex is composed of two ATP-binding proteins (PstB), two transmembrane proteins (PstC and PstA) and a solute-binding protein (PstS).

The protein localises to the cell inner membrane. It carries out the reaction phosphate(out) + ATP + H2O = ADP + 2 phosphate(in) + H(+). In terms of biological role, part of the ABC transporter complex PstSACB involved in phosphate import. Responsible for energy coupling to the transport system. This Nitrosospira multiformis (strain ATCC 25196 / NCIMB 11849 / C 71) protein is Phosphate import ATP-binding protein PstB.